A 436-amino-acid chain; its full sequence is Trigger factor (436 aa).

In terms of domain architecture, PPIase FKBP-type spans 163-248 (TDRVIIDFAG…VKNVAEAILP (86 aa)).

The protein belongs to the FKBP-type PPIase family. Tig subfamily.

The protein resides in the cytoplasm. The catalysed reaction is [protein]-peptidylproline (omega=180) = [protein]-peptidylproline (omega=0). Functionally, involved in protein export. Acts as a chaperone by maintaining the newly synthesized protein in an open conformation. Functions as a peptidyl-prolyl cis-trans isomerase. The protein is Trigger factor of Laribacter hongkongensis (strain HLHK9).